Consider the following 82-residue polypeptide: Progonadoliberin-3 (82 aa).

Positions M1–S23 are cleaved as a signal peptide. Q24 carries the pyrrolidone carboxylic acid modification. G33 carries the post-translational modification Glycine amide.

Belongs to the GnRH family.

Its subcellular location is the secreted. Its function is as follows. Stimulates the secretion of gonadotropins. In Oncorhynchus masou (Cherry salmon), this protein is Progonadoliberin-3 (gnrh3).